The sequence spans 342 residues: Autoinducer 2 import system permease protein LsrC (342 aa).

The Periplasmic segment spans residues 1–13 (MLKFIQNNREITA). Residues 14–34 (LLAVVLLFVLPGFLDRQYLSV) traverse the membrane as a helical segment. The Cytoplasmic segment spans residues 35–38 (QTLT). A helical transmembrane segment spans residues 39–59 (MVYSSAQILILLAMGATLVML). Residues 60-69 (TRNIDVSVGS) are Periplasmic-facing. The chain crosses the membrane as a helical span at residues 70-90 (ITGMCAVLLGMLLNAGYSLPV). Over 91–92 (AC) the chain is Cytoplasmic. The chain crosses the membrane as a helical span at residues 93–113 (VATLLLGLLAGFFNGVLVAWL). Position 114 (lysine 114) is a topological domain, periplasmic. The chain crosses the membrane as a helical span at residues 115–135 (IPAIVATLGTLGLYRGIMLLW). Topologically, residues 136–154 (TGGKWIEGLPAELKQLSAP) are cytoplasmic. Residues 155-175 (LLLGVSAIGWLTIILVAFMAW) form a helical membrane-spanning segment. Residues 176–212 (LLAKTAFGRSFYATGDNLQGARQLGVRTEAIRIVAFS) lie on the Periplasmic side of the membrane. Residues 213 to 233 (LNGCMAALAGIVFASQIGFIP) form a helical membrane-spanning segment. The Cytoplasmic segment spans residues 234 to 251 (NQTGTGLEMKAIAACVLG). A helical transmembrane segment spans residues 252–272 (GISLLGGSGAIIGAVLGAWFL). The Periplasmic segment spans residues 273–283 (TQIDSVLVLLR). Residues 284-304 (IPAWWNDFIAGLVLLAVLVFD) form a helical membrane-spanning segment. Over 305 to 342 (GRLRCALERNLRRQKYARFMTPPPSVKPASSGKKREAA) the chain is Cytoplasmic.

The protein belongs to the binding-protein-dependent transport system permease family. AraH/RbsC subfamily. As to quaternary structure, the complex is composed of two ATP-binding proteins (LsrA), two transmembrane proteins (LsrC and LsrD) and a solute-binding protein (LsrB).

The protein localises to the cell inner membrane. Its function is as follows. Part of the ABC transporter complex LsrABCD involved in autoinducer 2 (AI-2) import. Probably responsible for the translocation of the substrate across the membrane. This is Autoinducer 2 import system permease protein LsrC (lsrC) from Escherichia coli (strain K12 / DH10B).